Reading from the N-terminus, the 59-residue chain is uncharacterized protein (59 aa).

The helical transmembrane segment at 7–24 threads the bilayer; that stretch reads FLLVFIILAQLLSCTPSA.

It localises to the membrane. This is an uncharacterized protein from Rickettsia prowazekii (strain Madrid E).